The following is a 138-amino-acid chain: Large ribosomal subunit protein uL16 (138 aa).

Residues M1–Q17 show a composition bias toward basic residues. A disordered region spans residues M1 to S22.

The protein belongs to the universal ribosomal protein uL16 family. As to quaternary structure, part of the 50S ribosomal subunit.

Binds 23S rRNA and is also seen to make contacts with the A and possibly P site tRNAs. This chain is Large ribosomal subunit protein uL16, found in Mycobacterium avium (strain 104).